A 154-amino-acid polypeptide reads, in one-letter code: SsrA-binding protein (154 aa).

The disordered stretch occupies residues 134 to 154; it reads QREDLKRRAEDRDTQRELARF.

Belongs to the SmpB family.

Its subcellular location is the cytoplasm. In terms of biological role, required for rescue of stalled ribosomes mediated by trans-translation. Binds to transfer-messenger RNA (tmRNA), required for stable association of tmRNA with ribosomes. tmRNA and SmpB together mimic tRNA shape, replacing the anticodon stem-loop with SmpB. tmRNA is encoded by the ssrA gene; the 2 termini fold to resemble tRNA(Ala) and it encodes a 'tag peptide', a short internal open reading frame. During trans-translation Ala-aminoacylated tmRNA acts like a tRNA, entering the A-site of stalled ribosomes, displacing the stalled mRNA. The ribosome then switches to translate the ORF on the tmRNA; the nascent peptide is terminated with the 'tag peptide' encoded by the tmRNA and targeted for degradation. The ribosome is freed to recommence translation, which seems to be the essential function of trans-translation. The polypeptide is SsrA-binding protein (Nitratidesulfovibrio vulgaris (strain ATCC 29579 / DSM 644 / CCUG 34227 / NCIMB 8303 / VKM B-1760 / Hildenborough) (Desulfovibrio vulgaris)).